We begin with the raw amino-acid sequence, 652 residues long: Probable export ATP-binding/permease protein PFL_2149 (652 aa).

Positions 6–244 (LHLTGISRSF…APSEPPVSVR (239 aa)) constitute an ABC transporter domain. 42 to 49 (GASGSGKS) provides a ligand contact to ATP. 5 consecutive transmembrane segments (helical) span residues 251–271 (LVAS…ALVS), 277–297 (LLTM…VAIG), 525–545 (LALL…IGVM), 586–606 (IGGA…TLFI), and 615–635 (MGSI…FGFV).

It belongs to the ABC transporter superfamily. Macrolide exporter (TC 3.A.1.122) family. As to quaternary structure, probably part of a tripartite efflux system, which is composed of an inner membrane transporter, a periplasmic membrane fusion protein, and an outer membrane component.

It is found in the cell inner membrane. Functionally, probably part of a tripartite efflux system. The chain is Probable export ATP-binding/permease protein PFL_2149 from Pseudomonas fluorescens (strain ATCC BAA-477 / NRRL B-23932 / Pf-5).